A 142-amino-acid polypeptide reads, in one-letter code: Large ribosomal subunit protein uL13 (142 aa).

It belongs to the universal ribosomal protein uL13 family. Part of the 50S ribosomal subunit.

This protein is one of the early assembly proteins of the 50S ribosomal subunit, although it is not seen to bind rRNA by itself. It is important during the early stages of 50S assembly. The protein is Large ribosomal subunit protein uL13 of Wigglesworthia glossinidia brevipalpis.